The chain runs to 255 residues: Proliferating cell nuclear antigen 2 (255 aa).

The DNA-binding element occupies 61 to 80 (HCDRNVSLGLDLKSLGKVLK).

Belongs to the PCNA family. As to quaternary structure, homotrimer. Interacts with the catalytic subunits of two DNA polymerase complexes: PolD1 in the delta complex and PolE1/DNApol-epsilon255 in the epsilon complex.

Its subcellular location is the nucleus. It is found in the chromosome. The protein localises to the cytoplasm. Likely to be an auxiliary protein of DNA polymerase delta complex and is probably involved in the control of DNA replication and repair by increasing the polymerase's processibility. May function independently of PCNA during DNA repair. This is Proliferating cell nuclear antigen 2 from Drosophila melanogaster (Fruit fly).